Here is a 310-residue protein sequence, read N- to C-terminus: uncharacterized protein (310 aa).

A disordered region spans residues 1–70 (MAGNSQRRGA…ARGRTDETET (70 aa)). Over residues 49 to 62 (AAKRAKAQQRRPAR) the composition is skewed to basic residues. Positions 262, 282, and 291 each coordinate S-adenosyl-L-methionine.

Belongs to the class IV-like SAM-binding methyltransferase superfamily. RNA methyltransferase TrmH family.

This is an uncharacterized protein from Mycobacterium ulcerans (strain Agy99).